The chain runs to 251 residues: Protein DEEPER ROOTING 1 (251 aa).

Positions 46–52 (SLLAIGT) match the IGT motif motif. Residues 64 to 105 (VENSSDNVQSVQDTVKFTEEEVDKIRKEFETLLAIKDQAEAQ) are a coiled coil.

This sequence belongs to the LAZY family.

In terms of biological role, involved in the control of root growth angle. Involved in cell elongation in the root tip that causes asymmetric root growth and downward bending of the root in response to gravity. This chain is Protein DEEPER ROOTING 1, found in Oryza sativa subsp. japonica (Rice).